A 425-amino-acid polypeptide reads, in one-letter code: Serine hydroxymethyltransferase (425 aa).

(6S)-5,6,7,8-tetrahydrofolate-binding positions include Leu-125 and 129–131; that span reads GHL. At Lys-234 the chain carries N6-(pyridoxal phosphate)lysine.

It belongs to the SHMT family. As to quaternary structure, homodimer. It depends on pyridoxal 5'-phosphate as a cofactor.

It localises to the cytoplasm. The catalysed reaction is (6R)-5,10-methylene-5,6,7,8-tetrahydrofolate + glycine + H2O = (6S)-5,6,7,8-tetrahydrofolate + L-serine. The protein operates within one-carbon metabolism; tetrahydrofolate interconversion. It functions in the pathway amino-acid biosynthesis; glycine biosynthesis; glycine from L-serine: step 1/1. Functionally, catalyzes the reversible interconversion of serine and glycine with tetrahydrofolate (THF) serving as the one-carbon carrier. This reaction serves as the major source of one-carbon groups required for the biosynthesis of purines, thymidylate, methionine, and other important biomolecules. Also exhibits THF-independent aldolase activity toward beta-hydroxyamino acids, producing glycine and aldehydes, via a retro-aldol mechanism. This Marinomonas sp. (strain MWYL1) protein is Serine hydroxymethyltransferase.